The sequence spans 320 residues: Acetyl-coenzyme A carboxylase carboxyl transferase subunit alpha (320 aa).

Residues 41–295 (KIEEKAQQAL…GDAIAAAFAE (255 aa)) form the CoA carboxyltransferase C-terminal domain.

It belongs to the AccA family. In terms of assembly, acetyl-CoA carboxylase is a heterohexamer composed of biotin carboxyl carrier protein (AccB), biotin carboxylase (AccC) and two subunits each of ACCase subunit alpha (AccA) and ACCase subunit beta (AccD).

The protein resides in the cytoplasm. The enzyme catalyses N(6)-carboxybiotinyl-L-lysyl-[protein] + acetyl-CoA = N(6)-biotinyl-L-lysyl-[protein] + malonyl-CoA. The protein operates within lipid metabolism; malonyl-CoA biosynthesis; malonyl-CoA from acetyl-CoA: step 1/1. Functionally, component of the acetyl coenzyme A carboxylase (ACC) complex. First, biotin carboxylase catalyzes the carboxylation of biotin on its carrier protein (BCCP) and then the CO(2) group is transferred by the carboxyltransferase to acetyl-CoA to form malonyl-CoA. The sequence is that of Acetyl-coenzyme A carboxylase carboxyl transferase subunit alpha from Rhodopseudomonas palustris (strain ATCC BAA-98 / CGA009).